Reading from the N-terminus, the 87-residue chain is MSETKNVRTLQGKVVSDKMDKTVTVLVERKVKHPLYGKIIRLSTKIHAHDENNQYGIGDVVVISESRPLSKTKSWVVSELVEKARSI.

It belongs to the universal ribosomal protein uS17 family. As to quaternary structure, part of the 30S ribosomal subunit.

In terms of biological role, one of the primary rRNA binding proteins, it binds specifically to the 5'-end of 16S ribosomal RNA. The polypeptide is Small ribosomal subunit protein uS17 (Neisseria meningitidis serogroup C (strain 053442)).